Here is a 389-residue protein sequence, read N- to C-terminus: Acetylornithine deacetylase (389 aa).

Histidine 85 lines the Zn(2+) pocket. Aspartate 87 is an active-site residue. A Zn(2+)-binding site is contributed by aspartate 117. Glutamate 149 is a catalytic residue. The Zn(2+) site is built by glutamate 150, glutamate 174, and histidine 360.

Belongs to the peptidase M20A family. ArgE subfamily. In terms of assembly, homodimer. The cofactor is Zn(2+). It depends on Co(2+) as a cofactor. Glutathione is required as a cofactor.

The protein resides in the cytoplasm. It catalyses the reaction N(2)-acetyl-L-ornithine + H2O = L-ornithine + acetate. It participates in amino-acid biosynthesis; L-arginine biosynthesis; L-ornithine from N(2)-acetyl-L-ornithine (linear): step 1/1. Its function is as follows. Catalyzes the hydrolysis of the amide bond of N(2)-acetylated L-amino acids. Cleaves the acetyl group from N-acetyl-L-ornithine to form L-ornithine, an intermediate in L-arginine biosynthesis pathway, and a branchpoint in the synthesis of polyamines. The sequence is that of Acetylornithine deacetylase from Yersinia pseudotuberculosis serotype O:1b (strain IP 31758).